The sequence spans 259 residues: Polycomb group RING finger protein 1 (259 aa).

The RING-type zinc-finger motif lies at Cys45–Asn84.

In terms of assembly, component of a PRC1-like complex.

The protein localises to the nucleus. Its function is as follows. Component of a Polycomb group (PcG) multiprotein PRC1-like complex, a complex class required to maintain the transcriptionally repressive state of many genes, including Hox genes, throughout development. PcG PRC1 complex acts via chromatin remodeling and modification of histones; it mediates monoubiquitination of histone H2A 'Lys-119', rendering chromatin heritably changed in its expressibility. The polypeptide is Polycomb group RING finger protein 1 (pcgf1) (Xenopus tropicalis (Western clawed frog)).